Reading from the N-terminus, the 556-residue chain is Urocanate hydratase (556 aa).

NAD(+) is bound by residues 52 to 53, Q130, 176 to 178, E196, R201, 242 to 243, 263 to 267, 273 to 274, and Y322; these read GG, GMG, NA, QTSAH, and YL. C410 is a catalytic residue. An NAD(+)-binding site is contributed by G492.

This sequence belongs to the urocanase family. It depends on NAD(+) as a cofactor.

The protein localises to the cytoplasm. The enzyme catalyses 4-imidazolone-5-propanoate = trans-urocanate + H2O. It participates in amino-acid degradation; L-histidine degradation into L-glutamate; N-formimidoyl-L-glutamate from L-histidine: step 2/3. Its function is as follows. Catalyzes the conversion of urocanate to 4-imidazolone-5-propionate. This Acidiphilium cryptum (strain JF-5) protein is Urocanate hydratase.